Reading from the N-terminus, the 777-residue chain is MANSLILGSPINPEGEMMIQFSNNHDNNIEFQRRKKMKKNNPETETDSSSDLSCFVAQTGALLHLPQGFTSSNGSNRECRKSPRPIISSYSSSEKQFVTFTLAPVDGRHCRLRLPMQFTRENGINKPGKIYLVGKDGSKWLANLLLENNRGRMTLGDGWKSFVKANGLKTGDTYTFKLLWEDTTPVLSLCFEEYNTDTRVGEESSKESLPAEPSSQEKIVKDDNNKDESSTWKREGNHLRCKDSTSPSQNCTLTVTITPDSLEHGRLRLPLQFMTENSMNKPGEITLLGTDGAKWMASLLLEKKGRMSLGKGWKDFAKANGLKTGDSITLEPIWEDRTPVLSIKSSSGKGQSEFSKESLSIKPSSGNMTKKVENNREASRKYPPRSRESSSAIQNQFMALTPLRDIVSQVAHDLSIGEVINFRHKGDNMLRVSDLGSNCCGVQDLLAPSSNYDHDNISNISMKINPHIRKEAVTFSSYDGYAHDNFEPPSKKKVKKNNPEMEADYLSDHSCFVSHVTTSSLHTNALSLEVKESLPIEPSIKPNISEDDNNKEEDIIEENSSFEREKNHWICIDSISSSQNRFLTLTITPDSLKHGRLRLPLQFMIENSMNKPGEITVLGKDGAKWLVSLLLERRGRMSLDASSGQETREAEKNREESSSLWELEKRTYCPRKRDSSSDVKNRFLTLTLAPEDVKDGNLHLPCQFMRINGINKPGQITLLGRGGMKWFAYLLSGDGTVVVGNGWKGFCEANGVMLGETFVLEFIPKDDTNHVFKFYTK.

The segment at residues 97–193 (FVTFTLAPVD…TPVLSLCFEE (97 aa)) is a DNA-binding region (TF-B3 1). Disordered stretches follow at residues 200-248 (VGEE…TSPS) and 344-391 (KSSS…ESSS). Positions 218-243 (KIVKDDNNKDESSTWKREGNHLRCKD) are enriched in basic and acidic residues. A DNA-binding region (TF-B3 2) is located at residues 252 to 347 (TLTVTITPDS…TPVLSIKSSS (96 aa)). The span at 344 to 368 (KSSSGKGQSEFSKESLSIKPSSGNM) shows a compositional bias: polar residues. Over residues 370–388 (KKVENNREASRKYPPRSRE) the composition is skewed to basic and acidic residues. DNA-binding regions (TF-B3) lie at residues 582-676 (FLTL…RDSS) and 683-777 (FLTL…FYTK).

It is found in the nucleus. In Arabidopsis thaliana (Mouse-ear cress), this protein is B3 domain-containing protein REM-like 1.